Here is a 372-residue protein sequence, read N- to C-terminus: N-methyl-L-tryptophan oxidase (372 aa).

FAD is bound at residue 4-34; it reads DLIIIGSGSVGAAAGYYATRAGLKVLMTDAH. Residue cysteine 307 is modified to S-8alpha-FAD cysteine.

Belongs to the MSOX/MTOX family. MTOX subfamily. In terms of assembly, monomer. Requires FAD as cofactor.

The enzyme catalyses N(alpha)-methyl-L-tryptophan + O2 + H2O = L-tryptophan + formaldehyde + H2O2. Its function is as follows. Catalyzes the oxidative demethylation of N-methyl-L-tryptophan. The polypeptide is N-methyl-L-tryptophan oxidase (Salmonella arizonae (strain ATCC BAA-731 / CDC346-86 / RSK2980)).